Reading from the N-terminus, the 208-residue chain is Protein-L-isoaspartate O-methyltransferase (208 aa).

Ser-59 is a catalytic residue.

Belongs to the methyltransferase superfamily. L-isoaspartyl/D-aspartyl protein methyltransferase family.

The protein localises to the cytoplasm. The enzyme catalyses [protein]-L-isoaspartate + S-adenosyl-L-methionine = [protein]-L-isoaspartate alpha-methyl ester + S-adenosyl-L-homocysteine. Its function is as follows. Catalyzes the methyl esterification of L-isoaspartyl residues in peptides and proteins that result from spontaneous decomposition of normal L-aspartyl and L-asparaginyl residues. It plays a role in the repair and/or degradation of damaged proteins. This Shigella sonnei (strain Ss046) protein is Protein-L-isoaspartate O-methyltransferase.